We begin with the raw amino-acid sequence, 179 residues long: PP2C-like domain-containing protein R307 (179 aa).

One can recognise a PPM-type phosphatase domain in the interval M1–F176.

The protein resides in the virion. This Acanthamoeba polyphaga mimivirus (APMV) protein is PP2C-like domain-containing protein R307.